A 520-amino-acid chain; its full sequence is Probable alginate O-acetylase AlgI (520 aa).

Transmembrane regions (helical) follow at residues 7-24 (VFLF…YLSG), 39-61 (FYAW…NYWI), 78-100 (WLIL…NFGV), 115-137 (FVLT…ISYI), 150-172 (NLID…VLRF), 239-261 (LYFD…GFRF), 311-333 (LFLT…IWGA), 353-375 (VLNP…IFRA), 402-424 (ANLT…FFGL), and 483-505 (WLSQ…ASVL). The active site involves His-322.

Belongs to the membrane-bound acyltransferase family.

It is found in the cell inner membrane. The protein operates within glycan biosynthesis; alginate biosynthesis. Functionally, together with AlgJ and AlgF, forms an inner membrane complex which probably interacts with the alginate polymerization-transport complex and adds acetyl groups at the O-2 and O-3 positions of mannuronate residues. Acetylation of alginate is important for the architecture of biofilms and increases resistance to opsonic killing in the host. This is Probable alginate O-acetylase AlgI (algI) from Pseudomonas aeruginosa (strain ATCC 15692 / DSM 22644 / CIP 104116 / JCM 14847 / LMG 12228 / 1C / PRS 101 / PAO1).